The following is a 100-amino-acid chain: NADH-quinone oxidoreductase subunit K (100 aa).

3 helical membrane passes run 1-21 (MIGL…GLAG), 28-48 (ILLL…GFIA), and 64-84 (FIIA…ILWF).

It belongs to the complex I subunit 4L family. NDH-1 is composed of 14 different subunits. Subunits NuoA, H, J, K, L, M, N constitute the membrane sector of the complex.

The protein resides in the cell inner membrane. It catalyses the reaction a quinone + NADH + 5 H(+)(in) = a quinol + NAD(+) + 4 H(+)(out). NDH-1 shuttles electrons from NADH, via FMN and iron-sulfur (Fe-S) centers, to quinones in the respiratory chain. The immediate electron acceptor for the enzyme in this species is believed to be ubiquinone. Couples the redox reaction to proton translocation (for every two electrons transferred, four hydrogen ions are translocated across the cytoplasmic membrane), and thus conserves the redox energy in a proton gradient. In Helicobacter pylori (strain G27), this protein is NADH-quinone oxidoreductase subunit K.